Here is a 125-residue protein sequence, read N- to C-terminus: Phosphoribosyl-AMP cyclohydrolase (125 aa).

Mg(2+) is bound at residue D86. Position 87 (C87) interacts with Zn(2+). Residues D88 and D90 each contribute to the Mg(2+) site. Zn(2+) contacts are provided by C103 and C110.

This sequence belongs to the PRA-CH family. Homodimer. It depends on Mg(2+) as a cofactor. The cofactor is Zn(2+).

It is found in the cytoplasm. The catalysed reaction is 1-(5-phospho-beta-D-ribosyl)-5'-AMP + H2O = 1-(5-phospho-beta-D-ribosyl)-5-[(5-phospho-beta-D-ribosylamino)methylideneamino]imidazole-4-carboxamide. It participates in amino-acid biosynthesis; L-histidine biosynthesis; L-histidine from 5-phospho-alpha-D-ribose 1-diphosphate: step 3/9. Functionally, catalyzes the hydrolysis of the adenine ring of phosphoribosyl-AMP. In Erythrobacter litoralis (strain HTCC2594), this protein is Phosphoribosyl-AMP cyclohydrolase.